Consider the following 304-residue polypeptide: Energy-coupling factor transporter ATP-binding protein EcfA2 (304 aa).

The region spanning 3–261 (IIVKNISYIY…EKFLVENKLK (259 aa)) is the ABC transporter domain. 40-47 (GSTGSGKT) contributes to the ATP binding site.

This sequence belongs to the ABC transporter superfamily. Energy-coupling factor EcfA family. As to quaternary structure, forms a stable energy-coupling factor (ECF) transporter complex composed of 2 membrane-embedded substrate-binding proteins (S component), 2 ATP-binding proteins (A component) and 2 transmembrane proteins (T component).

The protein resides in the cell membrane. Its function is as follows. ATP-binding (A) component of a common energy-coupling factor (ECF) ABC-transporter complex. Unlike classic ABC transporters this ECF transporter provides the energy necessary to transport a number of different substrates. The chain is Energy-coupling factor transporter ATP-binding protein EcfA2 from Mycoplasmopsis pulmonis (strain UAB CTIP) (Mycoplasma pulmonis).